The primary structure comprises 282 residues: Acetyl-coenzyme A carboxylase carboxyl transferase subunit beta (282 aa).

In terms of domain architecture, CoA carboxyltransferase N-terminal spans 25-282 (LWTKCVSCGE…SSILTMLYRP (258 aa)). Positions 29, 32, 48, and 51 each coordinate Zn(2+). The segment at 29-51 (CVSCGETIYTKDIENNLNVCPKC) adopts a C4-type zinc-finger fold.

It belongs to the AccD/PCCB family. In terms of assembly, acetyl-CoA carboxylase is a heterohexamer composed of biotin carboxyl carrier protein (AccB), biotin carboxylase (AccC) and two subunits each of ACCase subunit alpha (AccA) and ACCase subunit beta (AccD). It depends on Zn(2+) as a cofactor.

It localises to the cytoplasm. It carries out the reaction N(6)-carboxybiotinyl-L-lysyl-[protein] + acetyl-CoA = N(6)-biotinyl-L-lysyl-[protein] + malonyl-CoA. Its pathway is lipid metabolism; malonyl-CoA biosynthesis; malonyl-CoA from acetyl-CoA: step 1/1. Component of the acetyl coenzyme A carboxylase (ACC) complex. Biotin carboxylase (BC) catalyzes the carboxylation of biotin on its carrier protein (BCCP) and then the CO(2) group is transferred by the transcarboxylase to acetyl-CoA to form malonyl-CoA. The protein is Acetyl-coenzyme A carboxylase carboxyl transferase subunit beta of Citrifermentans bemidjiense (strain ATCC BAA-1014 / DSM 16622 / JCM 12645 / Bem) (Geobacter bemidjiensis).